A 168-amino-acid polypeptide reads, in one-letter code: Ribosome maturation factor RimM (168 aa).

The PRC barrel domain maps to 94–167 (DGNYYHHQII…KVIIELLDGL (74 aa)).

The protein belongs to the RimM family. Binds ribosomal protein uS19.

It localises to the cytoplasm. In terms of biological role, an accessory protein needed during the final step in the assembly of 30S ribosomal subunit, possibly for assembly of the head region. Essential for efficient processing of 16S rRNA. May be needed both before and after RbfA during the maturation of 16S rRNA. It has affinity for free ribosomal 30S subunits but not for 70S ribosomes. This chain is Ribosome maturation factor RimM, found in Ligilactobacillus salivarius (strain UCC118) (Lactobacillus salivarius).